Reading from the N-terminus, the 649-residue chain is Exolysin (649 aa).

The helical transmembrane segment at 37 to 57 threads the bilayer; that stretch reads LIYTIIVLVVAAVVGLVIFIV. The stretch at 184-268 forms a coiled coil; the sequence is KDIIDNKLRE…KKATDDFKKK (85 aa). Over residues 258 to 275 the composition is skewed to basic and acidic residues; it reads AKKATDDFKKKKQADKNK. The segment at 258–325 is disordered; the sequence is AKKATDDFKK…QFQTRDSKGQ (68 aa). Pro residues predominate over residues 278–312; it reads ASKPSPGPKPAPKPSPGPKPAPKPSPGPKPSPGPS. The catalytic stretch occupies residues 407-649; the sequence is GGGGGGGNVS…KNVKISKWSP (243 aa).

It depends on Ca(2+) as a cofactor. Mg(2+) is required as a cofactor.

The protein localises to the membrane. Its subcellular location is the virion. Its activity is regulated as follows. Inhibited by Mn(2+), Cu(2+), Co(2+), Fe(2+), Zn(2+), Ni(2+), EDTA and EGTA. Functionally, during viral entry, involved in the degradation of the host cell wall at the site of attachment. The chain is Exolysin from Chlorella (PBCV-1).